Reading from the N-terminus, the 335-residue chain is 2-acylglycerol O-acyltransferase 2-B (335 aa).

2 helical membrane passes run 24–44 and 104–124; these read WAVS…LLLF and YIMG…NFCT. N206 is a glycosylation site (N-linked (GlcNAc...) asparagine).

It belongs to the diacylglycerol acyltransferase family.

The protein resides in the endoplasmic reticulum membrane. Its subcellular location is the cytoplasm. It localises to the perinuclear region. It catalyses the reaction a 2-acylglycerol + an acyl-CoA = a 1,2-diacylglycerol + CoA. It carries out the reaction a 2-acylglycerol + an acyl-CoA = a 1,2-diacyl-sn-glycerol + CoA. The catalysed reaction is a 2-acylglycerol + an acyl-CoA = a 2,3-diacyl-sn-glycerol + CoA. The enzyme catalyses a 1-acylglycerol + an acyl-CoA = a 1,2-diacylglycerol + CoA. It catalyses the reaction a 1-acylglycerol + an acyl-CoA = a 1,3-diacylglycerol + CoA. It carries out the reaction 1-O-alkylglycerol + an acyl-CoA = 1-O-alkyl-3-acylglycerol + CoA. The catalysed reaction is an acyl-CoA + a 1,2-diacyl-sn-glycerol = a triacyl-sn-glycerol + CoA. The protein operates within glycerolipid metabolism; triacylglycerol biosynthesis. In terms of biological role, catalyzes the formation of diacylglycerol from 2-monoacylglycerol and fatty acyl-CoA. Involved in glycerolipid synthesis and lipid metabolism. Catalyzes the formation of diacylglycerol, the precursor of triacylglycerol, by transferring the acyl chain of a fatty acyl-CoA to a monoacylglycerol. Plays a central role in absorption of dietary fat in the small intestine by catalyzing the resynthesis of triacylglycerol in enterocytes. Has a preference toward monoacylglycerols containing unsaturated fatty acids in an order of C18:3 &gt; C18:2 &gt; C18:1 &gt; C18:0 at sn-2. Able to use 1-monoalkylglycerol (1-MAkG, 1-O-alkylglycerol) as an acyl acceptor for the synthesis of monoalkyl-monoacylglycerol (MAMAG, 1-O-alkyl-3-acylglycerol or 1-O-alkyl-2-acylglycerol) and subsequently, with lower efficiency, may add another acyl chain producing monoalkyl-diacylglycerol (MADAG, 1-O-alkyl-2,3-diacylglycerol). Possesses weak but significant activity with diacylglycerol as substrate, producing triacylglycerol (triacyl-sn-glycerol). The sequence is that of 2-acylglycerol O-acyltransferase 2-B (mogat2-b) from Xenopus laevis (African clawed frog).